The sequence spans 308 residues: MTNKNQFNGLLLVDKPSGISSHDVVARLRRILSTRAVGHSGTLDPMASGLMACLVNEGTKLSQYILEGDKGYRLRAQFGIRTDTLDTTGETLETRPTDHLTRELILSEALKLQGEMEVEVPIYSAIKVQGKKLYEYARGEQEVTIPKKVMKFWDIEPVEIGSDWAEFDIKCSKGSYIRTWIDLLGKALGCGAAMSGLRRTWSSPYKIDQAQTLEQIEASVKGGSLGPAFVPMELALPQVKRIRIKGQDKVLLGNGQISHDLRSQLISAFNPDVDQYIQVLAQEGGELLAVIGLEPGRGFVLRRVFKYS.

The Nucleophile role is filled by Asp-44.

It belongs to the pseudouridine synthase TruB family. Type 1 subfamily.

It catalyses the reaction uridine(55) in tRNA = pseudouridine(55) in tRNA. Its function is as follows. Responsible for synthesis of pseudouridine from uracil-55 in the psi GC loop of transfer RNAs. The protein is tRNA pseudouridine synthase B of Bdellovibrio bacteriovorus (strain ATCC 15356 / DSM 50701 / NCIMB 9529 / HD100).